Here is a 232-residue protein sequence, read N- to C-terminus: Succinyl-CoA:3-ketoacid coenzyme A transferase subunit A (232 aa).

CoA is bound at residue 24–30 (GGFGLCG).

It belongs to the 3-oxoacid CoA-transferase subunit A family. As to quaternary structure, heterodimer of a subunit A and a subunit B.

It catalyses the reaction a 3-oxo acid + succinyl-CoA = a 3-oxoacyl-CoA + succinate. The protein is Succinyl-CoA:3-ketoacid coenzyme A transferase subunit A (scoA) of Helicobacter pylori (strain J99 / ATCC 700824) (Campylobacter pylori J99).